A 109-amino-acid chain; its full sequence is Fluoride-specific ion channel FluC 1 (109 aa).

3 helical membrane-spanning segments follow: residues 21 to 41 (LFIN…GFFI), 52 to 72 (IILS…YFLY), and 84 to 104 (IIFC…GFWI).

It belongs to the fluoride channel Fluc/FEX (TC 1.A.43) family.

Its subcellular location is the cell inner membrane. The enzyme catalyses fluoride(in) = fluoride(out). Fluoride-specific ion channel. Important for reducing fluoride concentration in the cell, thus reducing its toxicity. This chain is Fluoride-specific ion channel FluC 1, found in Prochlorococcus marinus (strain MIT 9312).